Consider the following 610-residue polypeptide: Glutamine--fructose-6-phosphate aminotransferase [isomerizing] (610 aa).

C2 functions as the Nucleophile; for GATase activity in the catalytic mechanism. The Glutamine amidotransferase type-2 domain occupies 2–219 (CGIVGATSER…EGDVADINRT (218 aa)). SIS domains lie at 287–427 (AADI…YRGM) and 459–600 (LAQD…VDQP). The active-site For Fru-6P isomerization activity is the K605.

As to quaternary structure, homodimer.

The protein localises to the cytoplasm. It carries out the reaction D-fructose 6-phosphate + L-glutamine = D-glucosamine 6-phosphate + L-glutamate. Its function is as follows. Catalyzes the first step in hexosamine metabolism, converting fructose-6P into glucosamine-6P using glutamine as a nitrogen source. The polypeptide is Glutamine--fructose-6-phosphate aminotransferase [isomerizing] (Idiomarina loihiensis (strain ATCC BAA-735 / DSM 15497 / L2-TR)).